A 331-amino-acid polypeptide reads, in one-letter code: MKVYAAPFEKFVNLADARLGTKILSVTDDWFADANRLFQPTPAVWKEGVFDDNGKWMDGWESRRKRFEGYDSAVIKLGVAGTLKGVDIDTSFFTGNFPPSASLEACFLASGEPDENTAWTEVLSSVELKGNSHHYHEISHDQAFSHLRFNIYPDGGVARLRVYGVPHRDWSKVTESEQIDLVAALNGGRSIACSDEHYGSMSNILNPGRGVNMGDGWETARRRTPGNDWVIVALGHKGEVEKVIVDTLHFKGNYPDSCSIQGAFVKGGTDSQIETQSLFWRELLPSQKLTMHAEHEFAEQVKAIGPITHIRLNVFPDGGVSRLRVLGKVSR.

The protein belongs to the allantoicase family.

It catalyses the reaction allantoate + H2O = (S)-ureidoglycolate + urea. The protein operates within nitrogen metabolism; (S)-allantoin degradation; (S)-ureidoglycolate from allantoate (aminidohydrolase route): step 1/1. The sequence is that of Probable allantoicase from Pseudomonas syringae pv. tomato (strain ATCC BAA-871 / DC3000).